A 481-amino-acid chain; its full sequence is Ribosomal protein uS12 methylthiotransferase RimO (481 aa).

The 117-residue stretch at 8 to 124 (MTVHLVSMGC…IAGRLRTILD (117 aa)) folds into the MTTase N-terminal domain. Residues Cys17, Cys53, and Cys87 each coordinate [4Fe-4S] cluster. Residues 148–188 (PTARAEVSVPGHGTAPDLSASVTPDSGPRATRRRLGTGPSA) form a disordered region. Positions 182–413 (LGTGPSAPLK…DLTDELVSQR (232 aa)) constitute a Radical SAM core domain. [4Fe-4S] cluster-binding residues include Cys196, Cys200, and Cys203. The 66-residue stretch at 415 to 480 (EDRIGTRGRV…GVDLVARPAN (66 aa)) folds into the TRAM domain.

Belongs to the methylthiotransferase family. RimO subfamily. [4Fe-4S] cluster is required as a cofactor.

The protein resides in the cytoplasm. The enzyme catalyses L-aspartate(89)-[ribosomal protein uS12]-hydrogen + (sulfur carrier)-SH + AH2 + 2 S-adenosyl-L-methionine = 3-methylsulfanyl-L-aspartate(89)-[ribosomal protein uS12]-hydrogen + (sulfur carrier)-H + 5'-deoxyadenosine + L-methionine + A + S-adenosyl-L-homocysteine + 2 H(+). Catalyzes the methylthiolation of an aspartic acid residue of ribosomal protein uS12. This chain is Ribosomal protein uS12 methylthiotransferase RimO, found in Cutibacterium acnes (strain DSM 16379 / KPA171202) (Propionibacterium acnes).